The primary structure comprises 386 residues: Lipoyl synthase, mitochondrial (386 aa).

The [4Fe-4S] cluster site is built by C110, C115, C121, C141, C145, C148, and S356. One can recognise a Radical SAM core domain in the interval 124–345; sequence GNDKSKATAT…KEQALEMGFL (222 aa).

It belongs to the radical SAM superfamily. Lipoyl synthase family. [4Fe-4S] cluster is required as a cofactor.

It is found in the mitochondrion. The enzyme catalyses [[Fe-S] cluster scaffold protein carrying a second [4Fe-4S](2+) cluster] + N(6)-octanoyl-L-lysyl-[protein] + 2 oxidized [2Fe-2S]-[ferredoxin] + 2 S-adenosyl-L-methionine + 4 H(+) = [[Fe-S] cluster scaffold protein] + N(6)-[(R)-dihydrolipoyl]-L-lysyl-[protein] + 4 Fe(3+) + 2 hydrogen sulfide + 2 5'-deoxyadenosine + 2 L-methionine + 2 reduced [2Fe-2S]-[ferredoxin]. It participates in protein modification; protein lipoylation via endogenous pathway; protein N(6)-(lipoyl)lysine from octanoyl-[acyl-carrier-protein]: step 2/2. Catalyzes the radical-mediated insertion of two sulfur atoms into the C-6 and C-8 positions of the octanoyl moiety bound to the lipoyl domains of lipoate-dependent enzymes, thereby converting the octanoylated domains into lipoylated derivatives. The polypeptide is Lipoyl synthase, mitochondrial (Zygosaccharomyces rouxii (strain ATCC 2623 / CBS 732 / NBRC 1130 / NCYC 568 / NRRL Y-229)).